A 157-amino-acid polypeptide reads, in one-letter code: UPF0758 protein VC_0510 (157 aa).

The region spanning 36 to 157 (ALTNPDATKE…CTSFAERGWL (122 aa)) is the MPN domain. H107, H109, and D120 together coordinate Zn(2+). Residues 107 to 120 (HNHPSGDSTPSQAD) carry the JAMM motif motif.

Belongs to the UPF0758 family.

This chain is UPF0758 protein VC_0510, found in Vibrio cholerae serotype O1 (strain ATCC 39315 / El Tor Inaba N16961).